The sequence spans 284 residues: Homeobox protein SIX1 (284 aa).

The homeobox DNA-binding region spans 124–183 (GEETSYCFKEKSRGVLREWYAHNPYPSPREKRELAEATGLTTTQVSNWFKNRRQRDRAAE). The segment at 168 to 284 (VSNWFKNRRQ…LTSSLVDLGS (117 aa)) is disordered. Over residues 179-190 (DRAAEAKERENT) the composition is skewed to basic and acidic residues. Over residues 227–284 (DQNSVLLLQSNMGHARSSNYSLPGLTASQPSHGLQAHQHQLQDSLLGPLTSSLVDLGS) the composition is skewed to polar residues.

Belongs to the SIX/Sine oculis homeobox family. Interacts with DACH1. Interacts with EYA1. Interacts with EYA2. Interacts with CDH1. Interacts with TBX18. Interacts with CEBPA. Interacts with CEBPB. Interacts with EBF2. Phosphorylated during interphase; becomes hyperphosphorylated during mitosis. Hyperphosphorylation impairs binding to promoter elements. Post-translationally, ubiquitinated by the anaphase promoting complex (APC), leading to its proteasomal degradation. In terms of tissue distribution, expressed in phalangeal tendons and in skeletal muscle and in head and body mesenchyme.

The protein localises to the nucleus. It localises to the cytoplasm. Its function is as follows. Transcription factor that is involved in the regulation of cell proliferation, apoptosis and embryonic development. Plays an important role in the development of several organs, including kidney, muscle and inner ear. Depending on context, functions as a transcriptional repressor or activator. Lacks an activation domain, and requires interaction with EYA family members for transcription activation. Mediates nuclear translocation of EYA1 and EYA2. Binds the 5'-TCA[AG][AG]TTNC-3' motif present in the MEF3 element in the MYOG promoter and CIDEA enhancer. Regulates the expression of numerous genes, including MYC, CCNA1, CCND1 and EZR. Acts as an activator of the IGFBP5 promoter, probably coactivated by EYA2. Repression of precursor cell proliferation in myoblasts is switched to activation through recruitment of EYA3 to the SIX1-DACH1 complex. During myogenesis, seems to act together with EYA2 and DACH2. Regulates the expression of CCNA1. Promotes brown adipocyte differentiation. This chain is Homeobox protein SIX1 (Six1), found in Mus musculus (Mouse).